An 802-amino-acid chain; its full sequence is Leucine--tRNA ligase (802 aa).

The 'HIGH' region motif lies at 40–51; it reads PYPSGAGLHVGH. Positions 576–580 match the 'KMSKS' region motif; sequence KMSKS. K579 contributes to the ATP binding site.

The protein belongs to the class-I aminoacyl-tRNA synthetase family.

The protein localises to the cytoplasm. It catalyses the reaction tRNA(Leu) + L-leucine + ATP = L-leucyl-tRNA(Leu) + AMP + diphosphate. The protein is Leucine--tRNA ligase of Bacillus cereus (strain G9842).